The chain runs to 542 residues: Chaperonin GroEL 2 (542 aa).

ATP is bound by residues Thr-29–Pro-32, Asp-86–Thr-90, Gly-413, Asn-477–Ala-479, and Asp-493.

This sequence belongs to the chaperonin (HSP60) family. In terms of assembly, forms a cylinder of 14 subunits composed of two heptameric rings stacked back-to-back. Interacts with the co-chaperonin GroES.

The protein resides in the cytoplasm. It catalyses the reaction ATP + H2O + a folded polypeptide = ADP + phosphate + an unfolded polypeptide.. Functionally, together with its co-chaperonin GroES, plays an essential role in assisting protein folding. The GroEL-GroES system forms a nano-cage that allows encapsulation of the non-native substrate proteins and provides a physical environment optimized to promote and accelerate protein folding. In Frankia alni (strain DSM 45986 / CECT 9034 / ACN14a), this protein is Chaperonin GroEL 2.